Consider the following 90-residue polypeptide: Large ribosomal subunit protein eL37 (90 aa).

Zn(2+) is bound by residues Cys-19, Cys-22, Cys-34, and Cys-37. The C4-type zinc finger occupies 19–37 (CRRCGRQSYHKQKNSCSSC). Residues 21 to 31 (RCGRQSYHKQK) show a composition bias toward basic residues. Residues 21-59 (RCGRQSYHKQKNSCSSCGYPNPKMRNPGSIKARRRRTIG) are disordered.

It belongs to the eukaryotic ribosomal protein eL37 family. The cofactor is Zn(2+).

Functionally, binds to the 23S rRNA. The protein is Large ribosomal subunit protein eL37 (RPL37) of Encephalitozoon cuniculi (strain GB-M1) (Microsporidian parasite).